We begin with the raw amino-acid sequence, 101 residues long: Large ribosomal subunit protein uL24 (101 aa).

It belongs to the universal ribosomal protein uL24 family. Part of the 50S ribosomal subunit.

In terms of biological role, one of two assembly initiator proteins, it binds directly to the 5'-end of the 23S rRNA, where it nucleates assembly of the 50S subunit. Functionally, one of the proteins that surrounds the polypeptide exit tunnel on the outside of the subunit. The polypeptide is Large ribosomal subunit protein uL24 (Streptococcus pyogenes serotype M2 (strain MGAS10270)).